Here is a 282-residue protein sequence, read N- to C-terminus: Undecaprenyl-diphosphatase 1 (282 aa).

8 consecutive transmembrane segments (helical) span residues 1–21, 46–66, 91–111, 117–137, 150–170, 193–213, 226–246, and 260–280; these read MLLLQIVVLALIQGITEVLPL, GVALDVAVHLGTLGAVALYFW, AFLVVLGTLPAVATVLLLAHF, SPGLATIGWTTLGFGLLLGVI, MGGIDCLLIGLAQCLALLPGV, FSMLLSIPAIAGAATLVGLDL, LIAAVTAFLAAFLAVAAMMAW, and VLLGAALLALAYLGPDLAPFL.

This sequence belongs to the UppP family.

It is found in the cell inner membrane. The enzyme catalyses di-trans,octa-cis-undecaprenyl diphosphate + H2O = di-trans,octa-cis-undecaprenyl phosphate + phosphate + H(+). Catalyzes the dephosphorylation of undecaprenyl diphosphate (UPP). Confers resistance to bacitracin. In Rhodospirillum rubrum (strain ATCC 11170 / ATH 1.1.1 / DSM 467 / LMG 4362 / NCIMB 8255 / S1), this protein is Undecaprenyl-diphosphatase 1.